A 376-amino-acid chain; its full sequence is Erythronate-4-phosphate dehydrogenase (376 aa).

Residues serine 45 and threonine 67 each coordinate substrate. Aspartate 147 lines the NAD(+) pocket. Arginine 209 is an active-site residue. Aspartate 233 lines the NAD(+) pocket. Residue glutamate 238 is part of the active site. The active-site Proton donor is histidine 255. Glycine 258 is a binding site for NAD(+). Tyrosine 259 lines the substrate pocket.

Belongs to the D-isomer specific 2-hydroxyacid dehydrogenase family. PdxB subfamily. In terms of assembly, homodimer.

It localises to the cytoplasm. The catalysed reaction is 4-phospho-D-erythronate + NAD(+) = (R)-3-hydroxy-2-oxo-4-phosphooxybutanoate + NADH + H(+). Its pathway is cofactor biosynthesis; pyridoxine 5'-phosphate biosynthesis; pyridoxine 5'-phosphate from D-erythrose 4-phosphate: step 2/5. In terms of biological role, catalyzes the oxidation of erythronate-4-phosphate to 3-hydroxy-2-oxo-4-phosphonooxybutanoate. The protein is Erythronate-4-phosphate dehydrogenase of Shewanella oneidensis (strain ATCC 700550 / JCM 31522 / CIP 106686 / LMG 19005 / NCIMB 14063 / MR-1).